Here is a 292-residue protein sequence, read N- to C-terminus: Short chain dehydrogenases/reductase notP' (292 aa).

The interval 1-25 (MPQTSDGNVHAPQYREAKPSQGDPS) is disordered. 7 residues coordinate NADP(+): leucine 48, aspartate 97, lysine 158, tyrosine 193, lysine 197, isoleucine 230, and threonine 232. Tyrosine 193 functions as the Proton donor in the catalytic mechanism. The active-site Lowers pKa of active site Tyr is the lysine 197.

The protein belongs to the short-chain dehydrogenases/reductases (SDR) family.

Its function is as follows. Short chain dehydrogenases/reductase; part of the gene cluster that mediates the biosynthesis of notoamide, a fungal indole alkaloid that belongs to a family of natural products containing a characteristic bicyclo[2.2.2]diazaoctane core. The first step of notoamide biosynthesis involves coupling of L-proline and L-tryptophan by the bimodular NRPS notE', to produce cyclo-L-tryptophan-L-proline called brevianamide F. The reverse prenyltransferase notF' then acts as a deoxybrevianamide E synthase and converts brevianamide F to deoxybrevianamide E via reverse prenylation at C-2 of the indole ring leading to the bicyclo[2.2.2]diazaoctane core. Deoxybrevianamide E is further hydroxylated at C-6 of the indole ring, likely catalyzed by the cytochrome P450 monooxygenase notG', to yield 6-hydroxy-deoxybrevianamide E. 6-hydroxy-deoxybrevianamide E is a specific substrate of the prenyltransferase notC' for normal prenylation at C-7 to produce 6-hydroxy-7-prenyl-deoxybrevianamide, also called notoamide S. As the proposed pivotal branching point in notoamide biosynthesis, notoamide S can be diverted to notoamide E through an oxidative pyran ring closure putatively catalyzed by either notH' cytochrome P450 monooxygenase or the notD' FAD-linked oxidoreductase. This step would be followed by an indole 2,3-epoxidation-initiated pinacol-like rearrangement catalyzed by the notB' FAD-dependent monooxygenase leading to the formation of notoamide C and notoamide D. On the other hand notoamide S is converted to notoamide T by notH' (or notD'), a bifunctional oxidase that also functions as the intramolecular Diels-Alderase responsible for generation of (-)-notoamide T. To generate antipodal (+)-notoaminide T, notH (or notD) in Aspergillus strain MF297-2 is expected to catalyze a Diels-Alder reaction leading to the opposite stereochemistry. The remaining oxidoreductase notD' (or notH') likely catalyzes the oxidative pyran ring formation to yield (-)-stephacidin A. The FAD-dependent monooxygenase notI' is highly similar to notB' and is predicted to catalyze a similar conversion from (-)-stephacidin A to (+)-notoamide B via the 2,3-epoxidation of (-)-stephacidin A followed by a pinacol-type rearrangement. Finally, it remains unclear which enzyme could be responsible for the final hydroxylation steps leading to notoamide A and sclerotiamide. The function of notP' in the notoamide biosynthesis has not been determined yet. The sequence is that of Short chain dehydrogenases/reductase notP' from Aspergillus versicolor.